The primary structure comprises 151 residues: Ribosome maturation factor RimP (151 aa).

The protein belongs to the RimP family.

It localises to the cytoplasm. Functionally, required for maturation of 30S ribosomal subunits. This is Ribosome maturation factor RimP from Pseudoalteromonas translucida (strain TAC 125).